Here is an 816-residue protein sequence, read N- to C-terminus: Neuroligin-4, X-linked (816 aa).

A signal peptide spans 1–41 (MSRPQGLLWLPLLFTPVCVMLNSNVLLWLTALAIKFTLIDS). The Extracellular portion of the chain corresponds to 42–676 (QAQYPVVNTN…TKRDYSTELS (635 aa)). A glycan (N-linked (GlcNAc...) asparagine) is linked at asparagine 102. Cystine bridges form between cysteine 110–cysteine 146 and cysteine 306–cysteine 317. The tract at residues 359 to 364 (QGEFLN) is interaction with NRXN1. Cysteines 476 and 510 form a disulfide. N-linked (GlcNAc...) asparagine glycosylation is present at asparagine 511. The disordered stretch occupies residues 636 to 659 (TKRPAITPANNPKHSKDPHKTGPE). A compositionally biased stretch (basic and acidic residues) spans 649–658 (HSKDPHKTGP). A helical transmembrane segment spans residues 677 to 697 (VTIAVGASLLFLNILAFAALY). Residues 698–816 (YKKDKRRHET…LPHGHSTTRV (119 aa)) are Cytoplasmic-facing. Phosphoserine is present on serine 712.

The protein belongs to the type-B carboxylesterase/lipase family. As to quaternary structure, homodimer. Interacts with NRXN1 in a calcium-dependent manner. Interaction with neurexins is mediated by heparan sulfate glycan modification on neurexin. Interacts through its C-terminus with DLG4/PSD-95 third PDZ domain. As to expression, expressed at highest levels in heart. Expressed at lower levels in liver, skeletal muscle and pancreas and at very low levels in brain.

Its subcellular location is the cell membrane. It localises to the postsynaptic density membrane. Its function is as follows. Cell surface protein involved in cell-cell-interactions via its interactions with neurexin family members. The chain is Neuroligin-4, X-linked (NLGN4X) from Homo sapiens (Human).